We begin with the raw amino-acid sequence, 422 residues long: CinA-like protein (422 aa).

This sequence belongs to the CinA family.

This is CinA-like protein from Mycolicibacterium gilvum (strain PYR-GCK) (Mycobacterium gilvum (strain PYR-GCK)).